A 345-amino-acid chain; its full sequence is Homeobox-leucine zipper protein HOX16 (345 aa).

The segment at residues 76–135 (LPEKKRRLTPEQVHLLERSFEEENKLEPERKTELARKLGLQPRQVAVWFQNRRARWKTKQ) is a DNA-binding region (homeobox). The segment at 134-178 (KQLERDFDRLKASFDALRADHDALLQDNHRLHSQVMSLTEKLQEK) is leucine-zipper. Residues 220–241 (FEEQQEQQVKAEDRLSTGSGGS) form a disordered region.

The protein belongs to the HD-ZIP homeobox family. Class I subfamily. In terms of tissue distribution, expressed in seedlings, stems, leaf sheaths and blades and panicles.

The protein resides in the nucleus. Probable transcription factor. The polypeptide is Homeobox-leucine zipper protein HOX16 (HOX16) (Oryza sativa subsp. indica (Rice)).